The primary structure comprises 621 residues: uncharacterized protein (621 aa).

It is found in the plastid. It localises to the chloroplast. This is an uncharacterized protein from Porphyra purpurea (Red seaweed).